A 657-amino-acid chain; its full sequence is Kinesin-like protein KIF22 (657 aa).

Residues 1-33 (MNVRAKKKPQQREMASASSGPSRSLSKGGVSRR) are disordered. Low complexity predominate over residues 16–33 (SASSGPSRSLSKGGVSRR). The 323-residue stretch at 38–360 (RVRVAVRLRP…LNFTARSKEV (323 aa)) folds into the Kinesin motor domain. 119–126 (GPTGAGKT) lines the ATP pocket. The disordered stretch occupies residues 388–415 (PSEAKKAKGPEEESTGSPESTAAPASAS). Residues 402–415 (TGSPESTAAPASAS) are compositionally biased toward low complexity. Residues Ser404, Ser419, and Ser444 each carry the phosphoserine modification. A Glycyl lysine isopeptide (Lys-Gly) (interchain with G-Cter in SUMO2) cross-link involves residue Lys457. Residues 457–502 (KRERMVLIKTVEEKNLEIERLKMKQKELEAKVLAQEALDPKEKENT) are a coiled coil. Residues Ser537, Ser554, and Ser573 each carry the phosphoserine modification.

Belongs to the TRAFAC class myosin-kinesin ATPase superfamily. Kinesin family. Interacts with FAM83D and SIAH1. Post-translationally, ubiquitinated; mediated by SIAH1 and leading to its subsequent proteasomal degradation.

Its subcellular location is the nucleus. It localises to the cytoplasm. The protein localises to the cytoskeleton. Kinesin family member that is involved in spindle formation and the movements of chromosomes during mitosis and meiosis. Binds to microtubules and to DNA. Plays a role in congression of laterally attached chromosomes in NDC80-depleted cells. This is Kinesin-like protein KIF22 (Kif22) from Rattus norvegicus (Rat).